A 469-amino-acid chain; its full sequence is Glutamate--tRNA ligase (469 aa).

The short motif at 9-19 (PSPTGFLHVGG) is the 'HIGH' region element. Positions 98, 100, 125, and 127 each coordinate Zn(2+). A 'KMSKS' region motif is present at residues 236–240 (KLSKR). Lys-239 serves as a coordination point for ATP.

Belongs to the class-I aminoacyl-tRNA synthetase family. Glutamate--tRNA ligase type 1 subfamily. In terms of assembly, monomer. The cofactor is Zn(2+).

It localises to the cytoplasm. The enzyme catalyses tRNA(Glu) + L-glutamate + ATP = L-glutamyl-tRNA(Glu) + AMP + diphosphate. Catalyzes the attachment of glutamate to tRNA(Glu) in a two-step reaction: glutamate is first activated by ATP to form Glu-AMP and then transferred to the acceptor end of tRNA(Glu). This is Glutamate--tRNA ligase from Shewanella baltica (strain OS185).